The sequence spans 728 residues: 1,4-alpha-glucan branching enzyme GlgB (728 aa).

The Nucleophile role is filled by aspartate 405. Glutamate 458 (proton donor) is an active-site residue.

Belongs to the glycosyl hydrolase 13 family. GlgB subfamily. In terms of assembly, monomer.

It catalyses the reaction Transfers a segment of a (1-&gt;4)-alpha-D-glucan chain to a primary hydroxy group in a similar glucan chain.. It functions in the pathway glycan biosynthesis; glycogen biosynthesis. Its function is as follows. Catalyzes the formation of the alpha-1,6-glucosidic linkages in glycogen by scission of a 1,4-alpha-linked oligosaccharide from growing alpha-1,4-glucan chains and the subsequent attachment of the oligosaccharide to the alpha-1,6 position. This chain is 1,4-alpha-glucan branching enzyme GlgB, found in Escherichia coli O157:H7.